We begin with the raw amino-acid sequence, 297 residues long: ER membrane protein complex subunit 2-B (297 aa).

TPR repeat units follow at residues 87–120 (HRVKRLTGLRFEAMERYDDALQIYDRILQDDPTN), 155–188 (QEAWHELAELYINELDYAKAAFCLEELILTNPHN), and 192–225 (YQQFAEVKYTQGGLENLELSRKYFSQALKLNNHS).

The protein belongs to the EMC2 family. Component of the ER membrane protein complex (EMC).

The protein localises to the endoplasmic reticulum membrane. In terms of biological role, part of the endoplasmic reticulum membrane protein complex (EMC) that enables the energy-independent insertion into endoplasmic reticulum membranes of newly synthesized membrane proteins. Preferentially accommodates proteins with transmembrane domains that are weakly hydrophobic or contain destabilizing features such as charged and aromatic residues. Involved in the cotranslational insertion of multi-pass membrane proteins in which stop-transfer membrane-anchor sequences become ER membrane spanning helices. It is also required for the post-translational insertion of tail-anchored/TA proteins in endoplasmic reticulum membranes. By mediating the proper cotranslational insertion of N-terminal transmembrane domains in an N-exo topology, with translocated N-terminus in the lumen of the ER, controls the topology of multi-pass membrane proteins. By regulating the insertion of various proteins in membranes, it is indirectly involved in many cellular processes. The chain is ER membrane protein complex subunit 2-B (emc2-b) from Xenopus laevis (African clawed frog).